Consider the following 199-residue polypeptide: MGDPKFHHKKYSTPRHPWEKERIDEENKIVVKYGLKNKKEIWRSEALLSSIRSQARDLRARLRTNDVNAQKQLERMIKRLNRYKLLSENATLDDVLSLTVENILDRRLQTIVFRKNLAISVRQARQLITHGHISVAGRRVTVPGMLVEAKDEDTIAYEENSPVANELHPIRQALLAPAQRSAEMKEGQGEASEEGETDE.

The region spanning 106–170 is the S4 RNA-binding domain; that stretch reads RRLQTIVFRK…SPVANELHPI (65 aa). A disordered region spans residues 177 to 199; sequence PAQRSAEMKEGQGEASEEGETDE.

Belongs to the universal ribosomal protein uS4 family. As to quaternary structure, part of the 30S ribosomal subunit. Contacts protein S5. The interaction surface between S4 and S5 is involved in control of translational fidelity.

Its function is as follows. One of the primary rRNA binding proteins, it binds directly to 16S rRNA where it nucleates assembly of the body of the 30S subunit. In terms of biological role, with S5 and S12 plays an important role in translational accuracy. This chain is Small ribosomal subunit protein uS4, found in Thermoplasma acidophilum (strain ATCC 25905 / DSM 1728 / JCM 9062 / NBRC 15155 / AMRC-C165).